The sequence spans 973 residues: Piwi-like protein 2 (973 aa).

The segment at 28-65 is disordered; the sequence is WPQASKPLDPALGRGAPAGRGHVFGKPEEPSTQRGPAQ. Positions 34 to 48 are enriched in low complexity; the sequence is PLDPALGRGAPAGRG. A Symmetric dimethylarginine modification is found at R47. Omega-N-methylarginine; by PRMT5; alternate is present on residues R76 and R97. At R76 the chain carries Symmetric dimethylarginine; by PRMT5; alternate. The residue at position 97 (R97) is a Symmetric dimethylarginine; alternate. R102 is modified (symmetric dimethylarginine; by PRMT5; alternate). R102 is modified (omega-N-methylarginine; alternate). 2 positions are modified to symmetric dimethylarginine: R146 and R158. Positions 162 to 199 are disordered; it reads GISREVDKPPCTFSTPSRGPPQLSSPPALPQSPLHSPD. A Symmetric dimethylarginine; by PRMT5 modification is found at R165. The 114-residue stretch at 389–502 folds into the PAZ domain; it reads CVLDVMHAIY…LLPELSFMTG (114 aa). R551 carries the symmetric dimethylarginine; by PRMT5 modification. The Piwi domain maps to 668–959; it reads MVVCIIMGPR…LAFLSGHILH (292 aa). Active-site residues include D745, E783, D815, and H948.

The protein belongs to the argonaute family. Piwi subfamily. In terms of assembly, interacts with DDX4, MAEL, EIF3A, EIF4E, EIF4G, PRMT5 and WDR77. Associates with EIF4E- and EIF4G-containing m7G cap-binding complexes. Interacts (when methylated on arginine residues) with TDRD1 and TDRKH/TDRD2. Interacts with TDRD12. Component of the PET complex, at least composed of EXD1, PIWIL2, TDRD12 and piRNAs. Interacts with MOV10L1. Interacts with GPAT2. Interacts with TEX19. Interacts with GSK3B. Interacts (via PIWI domain) with BMAL1 and CLOCK. Interacts with TEX15. Mg(2+) serves as cofactor. Post-translationally, arginine methylation by PRMT5 is required for the interaction with Tudor domain-containing protein TDRD1 and subsequent localization to the meiotic nuage, also named P granule. Expressed in adult testis and in most tumors.

The protein localises to the cytoplasm. Functionally, endoribonuclease that plays a central role during spermatogenesis by repressing transposable elements and preventing their mobilization, which is essential for the germline integrity. Plays an essential role in meiotic differentiation of spermatocytes, germ cell differentiation and in self-renewal of spermatogonial stem cells. Acts via the piRNA metabolic process, which mediates the repression of transposable elements during meiosis by forming complexes composed of piRNAs and Piwi proteins and govern the methylation and subsequent repression of transposons. During piRNA biosynthesis, plays a key role in the piRNA amplification loop, also named ping-pong amplification cycle, by acting as a 'slicer-competent' piRNA endoribonuclease that cleaves primary piRNAs, which are then loaded onto 'slicer-incompetent' PIWIL4. PIWIL2 slicing produces a pre-miRNA intermediate, which is then processed in mature piRNAs, and as well as a 16 nucleotide by-product that is degraded. Required for PIWIL4/MIWI2 nuclear localization and association with secondary piRNAs antisense. Besides their function in transposable elements repression, piRNAs are probably involved in other processes during meiosis such as translation regulation. Indirectly modulates expression of genes such as PDGFRB, SLC2A1, ITGA6, GJA7, THY1, CD9 and STRA8. When overexpressed, acts as an oncogene by inhibition of apoptosis and promotion of proliferation in tumors. Represses circadian rhythms by promoting the stability and activity of core clock components BMAL1 and CLOCK by inhibiting GSK3B-mediated phosphorylation and ubiquitination-dependent degradation of these proteins. This Homo sapiens (Human) protein is Piwi-like protein 2 (PIWIL2).